Consider the following 61-residue polypeptide: Small ribosomal subunit protein uS14 (61 aa).

Residues cysteine 24, cysteine 27, cysteine 40, and cysteine 43 each coordinate Zn(2+).

This sequence belongs to the universal ribosomal protein uS14 family. Zinc-binding uS14 subfamily. Part of the 30S ribosomal subunit. Contacts proteins S3 and S10. The cofactor is Zn(2+).

In terms of biological role, binds 16S rRNA, required for the assembly of 30S particles and may also be responsible for determining the conformation of the 16S rRNA at the A site. This is Small ribosomal subunit protein uS14 from Acidithiobacillus ferrooxidans (strain ATCC 23270 / DSM 14882 / CIP 104768 / NCIMB 8455) (Ferrobacillus ferrooxidans (strain ATCC 23270)).